The sequence spans 463 residues: Exodeoxyribonuclease 7 large subunit (463 aa).

It belongs to the XseA family. Heterooligomer composed of large and small subunits.

The protein localises to the cytoplasm. It carries out the reaction Exonucleolytic cleavage in either 5'- to 3'- or 3'- to 5'-direction to yield nucleoside 5'-phosphates.. Bidirectionally degrades single-stranded DNA into large acid-insoluble oligonucleotides, which are then degraded further into small acid-soluble oligonucleotides. The sequence is that of Exodeoxyribonuclease 7 large subunit from Klebsiella pneumoniae (strain 342).